Here is a 473-residue protein sequence, read N- to C-terminus: Lactate utilization protein B (473 aa).

2 4Fe-4S ferredoxin-type domains span residues 302–332 and 351–380; these read GSEF…GHSY and YNDY…LHDL. [4Fe-4S] cluster is bound by residues Cys311, Cys314, Cys317, Cys321, Cys364, Cys367, and Cys371.

It belongs to the LutB/YkgF family.

Is involved in L-lactate degradation and allows cells to grow with lactate as the sole carbon source. Has probably a role as an electron transporter during oxidation of L-lactate. The chain is Lactate utilization protein B from Bacillus cereus (strain AH820).